A 488-amino-acid polypeptide reads, in one-letter code: UDP-N-acetylmuramoyl-L-alanyl-D-glutamate--2,6-diaminopimelate ligase (488 aa).

Residue Ser31 coordinates UDP-N-acetyl-alpha-D-muramoyl-L-alanyl-D-glutamate. ATP is bound at residue 109 to 115 (GTNGKTS). UDP-N-acetyl-alpha-D-muramoyl-L-alanyl-D-glutamate is bound by residues Asn150, 151–152 (TT), Ser178, and Arg186. An N6-carboxylysine modification is found at Lys218. Meso-2,6-diaminopimelate contacts are provided by residues Arg384, 408–411 (DNPR), Gly458, and Glu462. Positions 408 to 411 (DNPR) match the Meso-diaminopimelate recognition motif motif.

Belongs to the MurCDEF family. MurE subfamily. The cofactor is Mg(2+). Post-translationally, carboxylation is probably crucial for Mg(2+) binding and, consequently, for the gamma-phosphate positioning of ATP.

Its subcellular location is the cytoplasm. The enzyme catalyses UDP-N-acetyl-alpha-D-muramoyl-L-alanyl-D-glutamate + meso-2,6-diaminopimelate + ATP = UDP-N-acetyl-alpha-D-muramoyl-L-alanyl-gamma-D-glutamyl-meso-2,6-diaminopimelate + ADP + phosphate + H(+). It functions in the pathway cell wall biogenesis; peptidoglycan biosynthesis. In terms of biological role, catalyzes the addition of meso-diaminopimelic acid to the nucleotide precursor UDP-N-acetylmuramoyl-L-alanyl-D-glutamate (UMAG) in the biosynthesis of bacterial cell-wall peptidoglycan. The polypeptide is UDP-N-acetylmuramoyl-L-alanyl-D-glutamate--2,6-diaminopimelate ligase (Bacillus licheniformis (strain ATCC 14580 / DSM 13 / JCM 2505 / CCUG 7422 / NBRC 12200 / NCIMB 9375 / NCTC 10341 / NRRL NRS-1264 / Gibson 46)).